The chain runs to 751 residues: Centrosomal protein of 68 kDa (751 aa).

2 stretches are compositionally biased toward basic and acidic residues: residues 1–17 (MALG…EDTK) and 86–96 (ASREPVAERSE). A disordered region spans residues 1 to 253 (MALGEEKAEA…PQPVFSGGDA (253 aa)). 2 stretches are compositionally biased toward polar residues: residues 131–144 (LPQT…TTIC) and 163–175 (APSS…SQWK). The segment covering 176–200 (SMPSPGSAAPQPSSCSVSASSTGSS) has biased composition (low complexity). Residue Ser326 is modified to Phosphoserine. Over residues 339-348 (STLKSPTNVF) the composition is skewed to polar residues. Disordered stretches follow at residues 339 to 474 (STLK…ESDD), 511 to 545 (SPLE…SGDP), and 590 to 611 (RLDR…KGGE). 2 stretches are compositionally biased toward basic and acidic residues: residues 399–416 (GSRD…RGAK) and 433–450 (RTRD…EKRT). A compositionally biased stretch (polar residues) spans 451–461 (SQSARRPTCTE). 2 positions are modified to phosphoserine: Ser466 and Ser472. The span at 520–537 (GPASLPSSSSQSQLPPGA) shows a compositional bias: low complexity.

In terms of assembly, interacts with CNTLN; the interaction recruits CEP68 to the centrosome. Interacts with the SCF(FBXW11) complex which contains SKP1, CUL1 and FBXW11; the interaction is probably mediated by FBXW11 and the complex also contains CDK5RAP2 and PCNT. Also interacts with F-box protein BTRC. Interacts with serine/threonine-protein kinase PLK1; the interaction leads to phosphorylation of CEP68 and its subsequent degradation. Interacts with NEK2; the interaction leads to phosphorylation of CEP68. Post-translationally, phosphorylation by PLK1 is required for binding to BTRC in prometaphase. Phosphorylated directly or indirectly by NEK2. NEK2-mediated phosphorylation promotes CEP68 dissociation from the centrosome and its degradation at the onset of mitosis. Ubiquitinated and targeted for proteasomal degradation in early mitosis by the SCF(BTRC) and/or SCF(FBXW11) E3 ubiquitin-protein ligase complexes. Degradation is complete by prometaphase and is required for removal of CDK5RAP2 from the peripheral pericentriolar material and subsequent centriole separation.

It is found in the cytoplasm. The protein localises to the cytoskeleton. It localises to the microtubule organizing center. Its subcellular location is the centrosome. Functionally, involved in maintenance of centrosome cohesion, probably as part of a linker structure which prevents centrosome splitting. Required for localization of CDK5RAP2 to the centrosome during interphase. Contributes to CROCC/rootletin filament formation. The sequence is that of Centrosomal protein of 68 kDa (CEP68) from Pongo abelii (Sumatran orangutan).